The chain runs to 986 residues: Translation initiation factor IF-2 (986 aa).

The disordered stretch occupies residues 95 to 394; it reads TFVRRDETSA…GRGKHQDQNT (300 aa). Positions 122–182 are enriched in basic and acidic residues; it reads ELQRREEEAR…EEEAAKKRAA (61 aa). Low complexity predominate over residues 183–222; sequence AEAAAREQAQAAKPAQAAQPAAAKAEPVAAKAAEPAVAKQ. A compositionally biased stretch (basic and acidic residues) spans 228–277; that stretch reads ERAAAERAAQREAAKKAEDAARQAAEKARAEQEQIAKRRAAAEAEARAIR. A compositionally biased stretch (low complexity) spans 320-342; sequence APSRPAAKKPAAAAPAATTTPSA. The span at 371–384 shows a compositional bias: gly residues; that stretch reads TSGGVDRGWRGGPK. Residues 486–655 form the tr-type G domain; sequence PRPPVVTVMG…LLQAEVLELK (170 aa). Positions 495-502 are G1; sequence GHVDHGKT. Residue 495-502 coordinates GTP; that stretch reads GHVDHGKT. The tract at residues 520 to 524 is G2; sequence GITQH. A G3 region spans residues 541–544; sequence DTPG. Residues 541–545 and 595–598 contribute to the GTP site; these read DTPGH and NKID. The interval 595-598 is G4; the sequence is NKID. The segment at 631-633 is G5; the sequence is SAK.

The protein belongs to the TRAFAC class translation factor GTPase superfamily. Classic translation factor GTPase family. IF-2 subfamily.

It localises to the cytoplasm. In terms of biological role, one of the essential components for the initiation of protein synthesis. Protects formylmethionyl-tRNA from spontaneous hydrolysis and promotes its binding to the 30S ribosomal subunits. Also involved in the hydrolysis of GTP during the formation of the 70S ribosomal complex. This is Translation initiation factor IF-2 from Paraburkholderia phytofirmans (strain DSM 17436 / LMG 22146 / PsJN) (Burkholderia phytofirmans).